The chain runs to 265 residues: Adenosine 5'-phosphosulfate reductase (265 aa).

The [4Fe-4S] cluster site is built by Cys135, Cys136, Cys218, and Cys221. Cys246 serves as the catalytic Nucleophile; cysteine thiosulfonate intermediate.

The protein belongs to the PAPS reductase family. CysH subfamily. The cofactor is [4Fe-4S] cluster.

Its subcellular location is the cytoplasm. It carries out the reaction [thioredoxin]-disulfide + sulfite + AMP + 2 H(+) = adenosine 5'-phosphosulfate + [thioredoxin]-dithiol. It functions in the pathway sulfur metabolism; hydrogen sulfide biosynthesis; sulfite from sulfate. Catalyzes the formation of sulfite from adenosine 5'-phosphosulfate (APS) using thioredoxin as an electron donor. The polypeptide is Adenosine 5'-phosphosulfate reductase (Rhizobium meliloti (strain 1021) (Ensifer meliloti)).